The sequence spans 1505 residues: Probable serine/threonine-protein kinase irlD (1505 aa).

The segment covering 1–18 (MGPKKGKRSHSKNHHHHN) has biased composition (basic residues). Disordered stretches follow at residues 1–30 (MGPK…NSGG), 121–211 (IPQP…NNIL), 548–571 (TTTT…DKEN), and 862–1013 (EENE…TIAT). Residues 139–158 (SISTTTTTTTATAIEIESSS) are compositionally biased toward low complexity. The span at 159–172 (GLTSNITDSTEIQL) shows a compositional bias: polar residues. Low complexity-rich tracts occupy residues 173 to 209 (DSTT…NSNN) and 548 to 561 (TTTT…TTTT). Basic and acidic residues-rich tracts occupy residues 562–571 (IDKDEKDKEN) and 862–882 (EENE…EKKK). Positions 846-892 (IRTEESLKAEKDLLEQEENEKKRLKEKRKKEEKEKKKQQNLKQKSLI) form a coiled coil. Over residues 896–924 (TTTTTTTTPIPITVPIPTQTQTPTQTPTQ) the composition is skewed to low complexity. Over residues 925–943 (TPIPTPIPTTPIPTTPIPI) the composition is skewed to pro residues. Low complexity-rich tracts occupy residues 944-954 (PIQLTPTTPKT) and 960-977 (TPKT…KTPK). Over residues 978-989 (NSTLDKQTISTP) the composition is skewed to polar residues. Positions 1054-1324 (RKDEFIIGRG…TENILLHPFF (271 aa)) constitute a Protein kinase domain. Residues 1060 to 1068 (IGRGSNGTL) and Lys-1083 contribute to the ATP site. Residue Asp-1194 is the Proton acceptor of the active site. One can recognise a KEN domain in the interval 1327–1505 (HEKKVKFIDA…LIYFNDLIIK (179 aa)).

The protein belongs to the protein kinase superfamily. Ser/Thr protein kinase family.

It catalyses the reaction L-seryl-[protein] + ATP = O-phospho-L-seryl-[protein] + ADP + H(+). The enzyme catalyses L-threonyl-[protein] + ATP = O-phospho-L-threonyl-[protein] + ADP + H(+). In Dictyostelium discoideum (Social amoeba), this protein is Probable serine/threonine-protein kinase irlD (irlD).